Here is a 367-residue protein sequence, read N- to C-terminus: Germination protease (367 aa).

The propeptide occupies 1 to 15 (MKEPLDLSKYSVRTD).

It belongs to the peptidase A25 family. In terms of assembly, homotetramer. Post-translationally, autoproteolytically processed. The inactive tetrameric zymogen termed p46 autoprocesses to a smaller form termed p41, which is active only during spore germination.

It catalyses the reaction Endopeptidase action with P4 Glu or Asp, P1 preferably Glu &gt; Asp, P1' hydrophobic and P2' Ala.. Functionally, initiates the rapid degradation of small, acid-soluble proteins during spore germination. This Bacillus cereus (strain G9842) protein is Germination protease.